The chain runs to 352 residues: Rhodopsin (352 aa).

Topologically, residues 1-36 (MNGTEGPFFYIPMVNTTGIVRSPYEYPQYYLVNPAA) are extracellular. Residues Asn-2 and Asn-15 are each glycosylated (N-linked (GlcNAc...) asparagine). Residues 37-61 (YACLGAYMFFLILVGFPVNFLTLYV) form a helical membrane-spanning segment. At 62 to 73 (TLEHKKLRTPLN) the chain is on the cytoplasmic side. Residues 74–96 (YILLNLAVADLFMVFGGFTTTMY) traverse the membrane as a helical segment. Over 97–110 (TSMHGYFVLGRLGC) the chain is Extracellular. A disulfide bridge connects residues Cys-110 and Cys-187. A helical transmembrane segment spans residues 111–133 (NIEGFFATLGGEIALWSLVVLAI). Residues 134–136 (ERW) carry the 'Ionic lock' involved in activated form stabilization motif. Over 134–152 (ERWVVVCKPISNFRFGENH) the chain is Cytoplasmic. Residues 153–173 (AIMGVAFTWFMASACAVPPLV) form a helical membrane-spanning segment. The Extracellular segment spans residues 174–202 (GWSRYIPEGMQCSCGVDYYTRAEGFNNES). N-linked (GlcNAc...) asparagine glycosylation is present at Asn-200. The helical transmembrane segment at 203–224 (FVIYMFIVHFCIPLAVVGFCYG) threads the bilayer. Over 225 to 252 (RLLCAVKEAAAAQQESETTQRAEREVSR) the chain is Cytoplasmic. Residues 253 to 274 (MVVIMVIGFLVCWLPYASVAWY) form a helical membrane-spanning segment. Residues 275 to 286 (IFTHQGSEFGPP) lie on the Extracellular side of the membrane. The helical transmembrane segment at 287-308 (FMTVPAFFAKSSSIYNPMIYIC) threads the bilayer. An N6-(retinylidene)lysine modification is found at Lys-296. Residues 309 to 352 (MNKQFRHCMITTLCCGKNPFEEEEGASTTKTEASSVSSSSVSPA) lie on the Cytoplasmic side of the membrane. S-palmitoyl cysteine attachment occurs at residues Cys-322 and Cys-323. Residues 331–352 (EEGASTTKTEASSVSSSSVSPA) are disordered. Residues 342–352 (SSVSSSSVSPA) show a composition bias toward low complexity.

This sequence belongs to the G-protein coupled receptor 1 family. Opsin subfamily. In terms of processing, phosphorylated on some or all of the serine and threonine residues present in the C-terminal region. Contains one covalently linked retinal chromophore.

Its subcellular location is the membrane. The protein resides in the cell projection. It localises to the cilium. The protein localises to the photoreceptor outer segment. Its function is as follows. Photoreceptor required for image-forming vision at low light intensity. While most salt water fish species use retinal as chromophore, most freshwater fish use 3-dehydroretinal, or a mixture of retinal and 3-dehydroretinal. Light-induced isomerization of 11-cis to all-trans retinal triggers a conformational change that activates signaling via G-proteins. Subsequent receptor phosphorylation mediates displacement of the bound G-protein alpha subunit by arrestin and terminates signaling. The polypeptide is Rhodopsin (rho) (Zosterisessor ophiocephalus (Grass goby)).